Consider the following 409-residue polypeptide: uncharacterized protein (409 aa).

The signal sequence occupies residues 1–29; sequence MARSRCVHRVVHQAACIGVIGLSTSALTT. A lipid anchor (N-palmitoyl cysteine) is attached at C30. C30 carries S-diacylglycerol cysteine lipidation.

It belongs to the TP013X lipoprotein family.

It localises to the cell membrane. This is an uncharacterized protein from Treponema pallidum (strain Nichols).